Here is a 159-residue protein sequence, read N- to C-terminus: Large ribosomal subunit protein uL11 (159 aa).

The segment covering 137–149 (EGKDPREVQREVD) has biased composition (basic and acidic residues). Residues 137–159 (EGKDPREVQREVDSGAWDKLLGG) form a disordered region.

This sequence belongs to the universal ribosomal protein uL11 family. As to quaternary structure, part of the ribosomal stalk of the 50S ribosomal subunit. Interacts with L10 and the large rRNA to form the base of the stalk. L10 forms an elongated spine to which L12 dimers bind in a sequential fashion forming a multimeric L10(L12)X complex.

Its function is as follows. Forms part of the ribosomal stalk which helps the ribosome interact with GTP-bound translation factors. In Korarchaeum cryptofilum (strain OPF8), this protein is Large ribosomal subunit protein uL11.